Reading from the N-terminus, the 315-residue chain is 4-hydroxy-3-methylbut-2-enyl diphosphate reductase (315 aa).

[4Fe-4S] cluster is bound at residue Cys-12. Residues His-41 and His-74 each contribute to the (2E)-4-hydroxy-3-methylbut-2-enyl diphosphate site. 2 residues coordinate dimethylallyl diphosphate: His-41 and His-74. 2 residues coordinate isopentenyl diphosphate: His-41 and His-74. Cys-96 lines the [4Fe-4S] cluster pocket. Position 124 (His-124) interacts with (2E)-4-hydroxy-3-methylbut-2-enyl diphosphate. His-124 is a dimethylallyl diphosphate binding site. An isopentenyl diphosphate-binding site is contributed by His-124. The active-site Proton donor is Glu-126. Residue Thr-168 participates in (2E)-4-hydroxy-3-methylbut-2-enyl diphosphate binding. Residue Cys-198 coordinates [4Fe-4S] cluster. (2E)-4-hydroxy-3-methylbut-2-enyl diphosphate contacts are provided by Ser-226, Ser-227, Asn-228, and Ser-270. Residues Ser-226, Ser-227, Asn-228, and Ser-270 each coordinate dimethylallyl diphosphate. Residues Ser-226, Ser-227, Asn-228, and Ser-270 each contribute to the isopentenyl diphosphate site.

Belongs to the IspH family. It depends on [4Fe-4S] cluster as a cofactor.

The enzyme catalyses isopentenyl diphosphate + 2 oxidized [2Fe-2S]-[ferredoxin] + H2O = (2E)-4-hydroxy-3-methylbut-2-enyl diphosphate + 2 reduced [2Fe-2S]-[ferredoxin] + 2 H(+). It carries out the reaction dimethylallyl diphosphate + 2 oxidized [2Fe-2S]-[ferredoxin] + H2O = (2E)-4-hydroxy-3-methylbut-2-enyl diphosphate + 2 reduced [2Fe-2S]-[ferredoxin] + 2 H(+). Its pathway is isoprenoid biosynthesis; dimethylallyl diphosphate biosynthesis; dimethylallyl diphosphate from (2E)-4-hydroxy-3-methylbutenyl diphosphate: step 1/1. The protein operates within isoprenoid biosynthesis; isopentenyl diphosphate biosynthesis via DXP pathway; isopentenyl diphosphate from 1-deoxy-D-xylulose 5-phosphate: step 6/6. Functionally, catalyzes the conversion of 1-hydroxy-2-methyl-2-(E)-butenyl 4-diphosphate (HMBPP) into a mixture of isopentenyl diphosphate (IPP) and dimethylallyl diphosphate (DMAPP). Acts in the terminal step of the DOXP/MEP pathway for isoprenoid precursor biosynthesis. The sequence is that of 4-hydroxy-3-methylbut-2-enyl diphosphate reductase from Pseudomonas savastanoi pv. phaseolicola (strain 1448A / Race 6) (Pseudomonas syringae pv. phaseolicola (strain 1448A / Race 6)).